The sequence spans 1943 residues: Cadherin-86C (1943 aa).

Positions M1–P102 are disordered. The Extracellular portion of the chain corresponds to M1 to K934. An N-linked (GlcNAc...) asparagine glycan is attached at N12. The span at P50–Q89 shows a compositional bias: basic residues. Positions H90–H100 are enriched in low complexity. 5 Cadherin domains span residues C238–F366, T367–F483, E484–F600, E601–F708, and D709–F832. N-linked (GlcNAc...) asparagine glycans are attached at residues N244, N419, N531, N579, N585, N612, and N645. N912 carries N-linked (GlcNAc...) asparagine glycosylation. A helical transmembrane segment spans residues V935–L955. Residues L956–S1943 lie on the Cytoplasmic side of the membrane. 5 disordered regions span residues D1038–E1058, K1390–I1442, E1458–R1516, Y1546–V1695, and K1707–D1895. Residues E1047–E1058 are compositionally biased toward basic and acidic residues. Basic residues predominate over residues I1426–I1442. Composition is skewed to basic and acidic residues over residues Q1486–R1497 and H1507–R1516. Over residues D1552–E1568 the composition is skewed to acidic residues. A compositionally biased stretch (basic and acidic residues) spans Q1580 to K1602. Positions K1633 to I1667 are enriched in polar residues. Residues S1709–S1724 are compositionally biased toward low complexity. Basic and acidic residues-rich tracts occupy residues T1754–P1764, L1774–T1793, H1800–A1810, and K1837–V1863. A compositionally biased stretch (polar residues) spans H1879 to T1889.

In terms of tissue distribution, as cell intercalation proceeds, a row of stigmatophore cells surrounding the spiracular chamber show expression of Cad86C. Expression is regulated by the Abd-B cascade, requiring sal. Expressed in a broad region of the morphogenetic furrow and in clusters of cells posterior to the morphogenetic furrow. Weakly expressed in the epithelium of wing imaginal disks. In eye imaginal disk cells within the morphogenetic furrow, expression is localized to the apical region.

The protein resides in the cell membrane. In terms of biological role, cadherins are calcium-dependent cell adhesion proteins. They preferentially interact with themselves in a homophilic manner in connecting cells. This chain is Cadherin-86C (Cad86C), found in Drosophila melanogaster (Fruit fly).